Here is a 492-residue protein sequence, read N- to C-terminus: Bifunctional purine biosynthesis protein PurH (492 aa).

An MGS-like domain is found at 1 to 144 (MKKAILSVSN…KNFKHVTTIV (144 aa)).

It belongs to the PurH family.

The catalysed reaction is (6R)-10-formyltetrahydrofolate + 5-amino-1-(5-phospho-beta-D-ribosyl)imidazole-4-carboxamide = 5-formamido-1-(5-phospho-D-ribosyl)imidazole-4-carboxamide + (6S)-5,6,7,8-tetrahydrofolate. It carries out the reaction IMP + H2O = 5-formamido-1-(5-phospho-D-ribosyl)imidazole-4-carboxamide. It participates in purine metabolism; IMP biosynthesis via de novo pathway; 5-formamido-1-(5-phospho-D-ribosyl)imidazole-4-carboxamide from 5-amino-1-(5-phospho-D-ribosyl)imidazole-4-carboxamide (10-formyl THF route): step 1/1. It functions in the pathway purine metabolism; IMP biosynthesis via de novo pathway; IMP from 5-formamido-1-(5-phospho-D-ribosyl)imidazole-4-carboxamide: step 1/1. In Staphylococcus epidermidis (strain ATCC 35984 / DSM 28319 / BCRC 17069 / CCUG 31568 / BM 3577 / RP62A), this protein is Bifunctional purine biosynthesis protein PurH.